The following is a 1271-amino-acid chain: Zinc finger transcription factor Trps1 (1271 aa).

Disordered regions lie at residues 1–76 (MVRK…DSAS) and 124–155 (SPIK…DMSP). The segment covering 34-49 (SKEISTDPMQENSEQS) has biased composition (polar residues). A compositionally biased stretch (basic and acidic residues) spans 54–65 (HNSDDHSFHDQE). Over residues 66–76 (PSSSINKDSAS) the composition is skewed to polar residues. The segment at 217–242 (FKCNICGYGYYGNDPTDLIKHFRKYH) adopts a C2H2-type 1; atypical zinc-finger fold. The C2H2-type 2; atypical zinc-finger motif lies at 328–353 (FRCKFCNFTYLAKSATELEQHFLKTH). The interval 353 to 387 (HPNKMKMSSDSGKPSEKSTNKSSPIPRSCEPGDLG) is disordered. The segment at 426 to 451 (YWCKFCSFSCESSSNSKLLEHHSKQH) adopts a C2H2-type 3; atypical zinc-finger fold. The segment at 513–543 (YNCQFCDFRYSKSHGPEVILVGPLLRHYQQH) adopts a C2H2-type 4; atypical zinc-finger fold. 3 consecutive C2H2-type zinc fingers follow at residues 604–627 (HQCD…ENAH), 656–679 (HSCT…RRVH), and 682–705 (YKCR…NSAH). The interval 843–877 (GVTAGASGEKSGQHTPQYPTAGDSKSKDESQSLLR) is disordered. Residues 886 to 910 (CANCLTTKTSLWRKNANGGYVCNAC) form a GATA-type zinc finger. Disordered stretches follow at residues 938–987 (RTRK…RENQ), 1031–1064 (SPQE…YMRP), and 1154–1196 (LDLA…EKSD). Over residues 972 to 985 (IRSEDHSMEGHQRE) the composition is skewed to basic and acidic residues. Residues 1031 to 1049 (SPQESSGEPGNSSSVSDGK) show a composition bias toward low complexity. Basic and acidic residues-rich tracts occupy residues 1050-1062 (GSSE…EKYM) and 1170-1196 (DSKE…EKSD). A transcriptional repressor domain region spans residues 1153–1271 (PLDLAMKHSR…QAEKNGKNKD (119 aa)). Glycyl lysine isopeptide (Lys-Gly) (interchain with G-Cter in SUMO) cross-links involve residues K1182 and K1191. C2H2-type zinc fingers lie at residues 1205–1227 (TKCV…MSCH) and 1233–1257 (FQCS…RGLH).

In terms of assembly, binds specifically to GATA sequences. Post-translationally, sumoylated. Sumoylation in the repressor domain inhibits the transcription repression activity. Sumoylation on Lys-1191 is the major site. Appears to be sumoylated on multiple sites.

The protein localises to the nucleus. In terms of biological role, transcriptional repressor. Represses expression of GATA-regulated genes at selected sites and stages in vertebrate development. This is Zinc finger transcription factor Trps1 (trps1) from Xenopus laevis (African clawed frog).